A 657-amino-acid polypeptide reads, in one-letter code: Protein mono-ADP-ribosyltransferase TIPARP (657 aa).

The segment covering methionine 1–proline 10 has biased composition (acidic residues). The interval methionine 1–aspartate 22 is disordered. Cysteine 39 bears the ADP-ribosylcysteine mark. The Nuclear localization signal motif lies at lysine 41–arginine 48. The segment at glutamine 121–aspartate 154 is disordered. The C3H1-type zinc-finger motif lies at glutamate 238–leucine 265. Residues serine 333–isoleucine 411 enclose the WWE domain. The PARP catalytic domain occupies tyrosine 449 to isoleucine 657.

This sequence belongs to the ARTD/PARP family. As to quaternary structure, interacts with AHR. Auto-mono-ADP-ribosylated. In terms of tissue distribution, ubiquitously expressed.

Its subcellular location is the nucleus. The enzyme catalyses L-aspartyl-[protein] + NAD(+) = 4-O-(ADP-D-ribosyl)-L-aspartyl-[protein] + nicotinamide. The catalysed reaction is L-glutamyl-[protein] + NAD(+) = 5-O-(ADP-D-ribosyl)-L-glutamyl-[protein] + nicotinamide. It catalyses the reaction L-cysteinyl-[protein] + NAD(+) = S-(ADP-D-ribosyl)-L-cysteinyl-[protein] + nicotinamide + H(+). Functionally, ADP-ribosyltransferase that mediates mono-ADP-ribosylation of glutamate, aspartate and cysteine residues on target proteins. Acts as a negative regulator of AHR by mediating mono-ADP-ribosylation of AHR, leading to inhibit transcription activator activity of AHR. In Mus musculus (Mouse), this protein is Protein mono-ADP-ribosyltransferase TIPARP.